Consider the following 490-residue polypeptide: Homoserine O-acetyltransferase (490 aa).

In terms of domain architecture, AB hydrolase-1 spans 48-354; the sequence is NVILVCHALT…NSEYGHDAFL (307 aa). Catalysis depends on Ser-153, which acts as the Nucleophile. Residue Arg-223 coordinates substrate. Residues Asp-317 and His-350 contribute to the active site. Asp-351 provides a ligand contact to substrate. CBS domains follow at residues 377 to 434 and 438 to 490; these read MSHT…ANSI and MTKN…LYEK.

It belongs to the AB hydrolase superfamily. MetX family. Homodimer.

The protein localises to the cytoplasm. It catalyses the reaction L-homoserine + acetyl-CoA = O-acetyl-L-homoserine + CoA. The protein operates within amino-acid biosynthesis; L-methionine biosynthesis via de novo pathway; O-acetyl-L-homoserine from L-homoserine: step 1/1. In terms of biological role, transfers an acetyl group from acetyl-CoA to L-homoserine, forming acetyl-L-homoserine. This Methanosphaera stadtmanae (strain ATCC 43021 / DSM 3091 / JCM 11832 / MCB-3) protein is Homoserine O-acetyltransferase.